A 542-amino-acid polypeptide reads, in one-letter code: 2,3-bisphosphoglycerate-independent phosphoglycerate mutase (542 aa).

Positions 13 and 63 each coordinate Mn(2+). Residue S63 is the Phosphoserine intermediate of the active site. Residues H124, 154 to 155 (RD), R186, R192, 263 to 266 (RADR), and K357 each bind substrate. 5 residues coordinate Mn(2+): D424, H428, D465, H466, and H484.

The protein belongs to the BPG-independent phosphoglycerate mutase family. In terms of assembly, monomer. Mn(2+) serves as cofactor.

It catalyses the reaction (2R)-2-phosphoglycerate = (2R)-3-phosphoglycerate. It functions in the pathway carbohydrate degradation; glycolysis; pyruvate from D-glyceraldehyde 3-phosphate: step 3/5. In terms of biological role, catalyzes the interconversion of 2-phosphoglycerate and 3-phosphoglycerate. The protein is 2,3-bisphosphoglycerate-independent phosphoglycerate mutase of Herpetosiphon aurantiacus (strain ATCC 23779 / DSM 785 / 114-95).